The following is a 357-amino-acid chain: Protein RecA (357 aa).

73–80 (GPESSGKT) lines the ATP pocket.

Belongs to the RecA family.

Its subcellular location is the cytoplasm. Functionally, can catalyze the hydrolysis of ATP in the presence of single-stranded DNA, the ATP-dependent uptake of single-stranded DNA by duplex DNA, and the ATP-dependent hybridization of homologous single-stranded DNAs. It interacts with LexA causing its activation and leading to its autocatalytic cleavage. This Nitratidesulfovibrio vulgaris (strain ATCC 29579 / DSM 644 / CCUG 34227 / NCIMB 8303 / VKM B-1760 / Hildenborough) (Desulfovibrio vulgaris) protein is Protein RecA.